The following is a 212-amino-acid chain: Bcl-2-related ovarian killer protein (212 aa).

A Phosphoserine modification is found at Ser-7. The interval 15–45 (MDAFDRSPTDKELVAQAKALGREYVHARLLR) is interactions with ITPR1. Residues Lys-25 and Lys-32 each participate in a glycyl lysine isopeptide (Lys-Gly) (interchain with G-Cter in ubiquitin) cross-link. A BH4 motif is present at residues 32–44 (KALGREYVHARLL). A BH3 motif is present at residues 66–82 (VCAVLLRLGDELEMIRP). Positions 70 to 78 (LLRLGDELE) are nuclear export signal. The BH1 motif lies at 112–131 (HIFSAGITWGKVVSLYAVAA). Residues Lys-159 and Lys-176 each participate in a glycyl lysine isopeptide (Lys-Gly) (interchain with G-Cter in ubiquitin) cross-link. Positions 164–178 (WLRRRGGWTDVLKCV) match the BH2 motif. Residues 189 to 209 (WLVAALCSFGRFLKAAFFVLL) traverse the membrane as a helical segment.

It belongs to the Bcl-2 family. Monomer; positively regulates apoptotic process. Homodimer. Heterodimer. Oligomer; promoted by apoptotic stimuli and BH3-only proteins; mediates constitutive activation. Interacts (via BH4 domain) with ITPR1; enhances BOK expression and stabilization; limits apoptosis and prevents ubiquitination and then degradation; protects ITPR1 from proteolysis by CASP3 during apoptosis. Interacts with ITPR2 and ITPR3; binds most strongly to ITPR2, and barely to ITPR3; regulates their expression. Interacts with XPO1; translocates to the cytoplasm. Interacts with BNIP3; promotes oligomerization. In terms of processing, ubiquitinated by AMFR/gp78 E3 ubiquitin ligase complex; mediates degradation by ubiquitin-proteasome pathway in a VCP/p97-dependent manner; prevents from pro-apoptotic activity; promotes degradation of newly synthesized proteins that are not ITPR1 associated. Expressed mainly in oocytes; weak expression in granulosa cells of the developing follicles. In adult human ovaries, expressed in granulosa cells at all follicular stages, but expression in primordial/primary follicles granulosa cell is stronger than in secondary and antral follicles.

It is found in the mitochondrion membrane. It localises to the endoplasmic reticulum membrane. The protein resides in the mitochondrion inner membrane. Its subcellular location is the cytoplasm. The protein localises to the nucleus. It is found in the mitochondrion. It localises to the endoplasmic reticulum. The protein resides in the mitochondrion outer membrane. Its subcellular location is the early endosome membrane. The protein localises to the recycling endosome membrane. It is found in the nucleus outer membrane. It localises to the golgi apparatus. The protein resides in the cis-Golgi network membrane. Its subcellular location is the trans-Golgi network membrane. The protein localises to the membrane. Apoptosis regulator that functions through different apoptotic signaling pathways. Plays a roles as pro-apoptotic protein that positively regulates intrinsic apoptotic process in a BAX- and BAK1-dependent manner or in a BAX- and BAK1-independent manner. In response to endoplasmic reticulum stress promotes mitochondrial apoptosis through downstream BAX/BAK1 activation and positive regulation of PERK-mediated unfolded protein response. Activates apoptosis independently of heterodimerization with survival-promoting BCL2 and BCL2L1 through induction of mitochondrial outer membrane permeabilization, in a BAX- and BAK1-independent manner, in response to inhibition of ERAD-proteasome degradation system, resulting in cytochrome c release. In response to DNA damage, mediates intrinsic apoptotic process in a TP53-dependent manner. Plays a role in granulosa cell apoptosis by CASP3 activation. Plays a roles as anti-apoptotic protein during neuronal apoptotic process, by negatively regulating poly ADP-ribose polymerase-dependent cell death through regulation of neuronal calcium homeostasis and mitochondrial bioenergetics in response to NMDA excitation. In addition to its role in apoptosis, may regulate trophoblast cell proliferation during the early stages of placental development, by acting on G1/S transition through regulation of CCNE1 expression. May also play a role as an inducer of autophagy by disrupting interaction between MCL1 and BECN1. Functionally, pro-apoptotic molecule exerting its function through the mitochondrial pathway. This is Bcl-2-related ovarian killer protein from Homo sapiens (Human).